Reading from the N-terminus, the 493-residue chain is Glutamate--tRNA ligase (493 aa).

The short motif at 10 to 20 is the 'HIGH' region element; it reads PSPTGDPHVGT. Residues 251–255 carry the 'KMSKS' region motif; that stretch reads KLSKR. Lys-254 lines the ATP pocket.

It belongs to the class-I aminoacyl-tRNA synthetase family. Glutamate--tRNA ligase type 1 subfamily. In terms of assembly, monomer.

The protein localises to the cytoplasm. The enzyme catalyses tRNA(Glu) + L-glutamate + ATP = L-glutamyl-tRNA(Glu) + AMP + diphosphate. Its function is as follows. Catalyzes the attachment of glutamate to tRNA(Glu) in a two-step reaction: glutamate is first activated by ATP to form Glu-AMP and then transferred to the acceptor end of tRNA(Glu). The sequence is that of Glutamate--tRNA ligase from Pseudomonas entomophila (strain L48).